Reading from the N-terminus, the 396-residue chain is Elongation factor Tu (396 aa).

In terms of domain architecture, tr-type G spans K10 to E206. Residues G19 to T26 form a G1 region. Position 19–26 (G19–T26) interacts with GTP. T26 is a binding site for Mg(2+). Positions G60–S64 are G2. The tract at residues D81–G84 is G3. GTP-binding positions include D81 to H85 and N136 to D139. A G4 region spans residues N136–D139. The tract at residues S174 to L176 is G5.

Belongs to the TRAFAC class translation factor GTPase superfamily. Classic translation factor GTPase family. EF-Tu/EF-1A subfamily. As to quaternary structure, monomer.

Its subcellular location is the cytoplasm. The catalysed reaction is GTP + H2O = GDP + phosphate + H(+). In terms of biological role, GTP hydrolase that promotes the GTP-dependent binding of aminoacyl-tRNA to the A-site of ribosomes during protein biosynthesis. The protein is Elongation factor Tu of Gluconacetobacter diazotrophicus (strain ATCC 49037 / DSM 5601 / CCUG 37298 / CIP 103539 / LMG 7603 / PAl5).